The following is a 334-amino-acid chain: Malate dehydrogenase, cytoplasmic (334 aa).

S2 carries the N-acetylserine modification. NAD(+) contacts are provided by residues G11–A17 and D42. Residues R92 and R98 each coordinate substrate. Residue N105 coordinates NAD(+). N6-succinyllysine is present on K110. Q112 contacts NAD(+). N6-acetyllysine occurs at positions 118 and 121. V129–N131 serves as a coordination point for NAD(+). Residues N131 and R162 each contribute to the substrate site. Residue H187 is the Proton acceptor of the active site. K214 is subject to N6-succinyllysine. S217 bears the Phosphoserine mark. R230 is subject to Omega-N-methylarginine. At S241 the chain carries Phosphoserine. K298 carries the post-translational modification N6-acetyllysine; alternate. K298 bears the N6-succinyllysine; alternate mark. S309 carries the phosphoserine modification. K318 bears the N6-succinyllysine mark. Phosphoserine is present on S333.

It belongs to the LDH/MDH superfamily. MDH type 2 family. Homodimer. Post-translationally, ISGylated. Acetylation at Lys-118 dramatically enhances enzymatic activity and promotes adipogenic differentiation.

It localises to the cytoplasm. It is found in the cytosol. The catalysed reaction is (S)-malate + NAD(+) = oxaloacetate + NADH + H(+). It catalyses the reaction (2R)-2-hydroxy-3-(4-hydroxyphenyl)propanoate + NAD(+) = 3-(4-hydroxyphenyl)pyruvate + NADH + H(+). It carries out the reaction (S)-2-hydroxyglutarate + NAD(+) = 2-oxoglutarate + NADH + H(+). Catalyzes the reduction of aromatic alpha-keto acids in the presence of NADH. Plays essential roles in the malate-aspartate shuttle and the tricarboxylic acid cycle, important in mitochondrial NADH supply for oxidative phosphorylation. Catalyzes the reduction of 2-oxoglutarate to 2-hydroxyglutarate, leading to elevated reactive oxygen species (ROS). The chain is Malate dehydrogenase, cytoplasmic (MDH1) from Bos taurus (Bovine).